Reading from the N-terminus, the 172-residue chain is MTARTMDAGTGDVTLFHTSQLDKLINMARENSLWYLLFGLACCGIELMQFGGPRADVMRFGAIPRASPRQADFMIVAGTLTYKMAERAKLLYDQMPEPKYVISMGSCSNCGGLFQLGYSVCKGVDKVIPVDVYVPGCPPRPEALTEGLIRLQELIRSEPWATKRRPAKGSAA.

[4Fe-4S] cluster is bound by residues cysteine 42, cysteine 43, cysteine 107, and cysteine 137.

It belongs to the complex I 20 kDa subunit family. In terms of assembly, NDH-1 is composed of 14 different subunits. Subunits NuoB, C, D, E, F, and G constitute the peripheral sector of the complex. The cofactor is [4Fe-4S] cluster.

It localises to the cell inner membrane. It carries out the reaction a quinone + NADH + 5 H(+)(in) = a quinol + NAD(+) + 4 H(+)(out). Its function is as follows. NDH-1 shuttles electrons from NADH, via FMN and iron-sulfur (Fe-S) centers, to quinones in the respiratory chain. Couples the redox reaction to proton translocation (for every two electrons transferred, four hydrogen ions are translocated across the cytoplasmic membrane), and thus conserves the redox energy in a proton gradient. The polypeptide is NADH-quinone oxidoreductase subunit B 1 (Anaeromyxobacter sp. (strain Fw109-5)).